The primary structure comprises 720 residues: Calpain-12 (720 aa).

The Calpain catalytic domain maps to 45-341; it reads LFRDPCFPAG…FNTVQICSLS (297 aa). Active-site residues include C105, H259, and N283. Residues 342–541 are domain III; the sequence is PEVLGPSPAG…DDVISADLDA (200 aa). Over residues 393-403 the composition is skewed to acidic residues; the sequence is DEEEDDDDEEG. Residues 393–415 form a disordered region; it reads DEEEDDDDEEGPWGGWGAAGARG. Positions 542 to 720 are domain IV; that stretch reads LQAPYKPLEL…KQWSEVATFS (179 aa). An EF-hand domain is found at 621–656; sequence GHLMSWQATFDKFDEDASGTMNSCELRLALTAAGFH. 5 residues coordinate Ca(2+): D634, D636, S638, T640, and E645.

It belongs to the peptidase C2 family. As to expression, expression localized to the cortex of the hair follicle during the anagen phase of hair cycle.

In terms of biological role, calcium-regulated non-lysosomal thiol-protease. This is Calpain-12 (Capn12) from Mus musculus (Mouse).